A 130-amino-acid chain; its full sequence is Small ribosomal subunit protein uS9 (130 aa).

Belongs to the universal ribosomal protein uS9 family.

This chain is Small ribosomal subunit protein uS9, found in Clostridium perfringens (strain ATCC 13124 / DSM 756 / JCM 1290 / NCIMB 6125 / NCTC 8237 / Type A).